The sequence spans 901 residues: MVSLGGLARKLFGSANDRRVRGYQGRVDAINALEAEMKALSDEALAAKTVEFRQQLAEGKTLDDLLVPAFAVVREAARRVLGLRPFDVQLIGGMILHERSISEMKTGEGKTLVATLPVYLNALAGKGVHVVTVNDYLAQRDAGMMGRIYGFLGLTTGVIVHGLTDEQRRDAYACDVTYATNNELGFDYLRDNMKYERAQMVQRGHFFAIVDEVDSILVDEARTPLIISGPLDDRSDLYNTINDFIPLLSPEDYEIDEKQRSANFSEEGTEKLENLLRQAGLLKGESLYDIENVAIVHHVNNALKAHKLFTRDKDYIVRNDEIVIIDEFTGRMMPGRRYSEGQHQALEAKEKVQIQPENQTLASVTFQNYFRMYEKLAGMTGTAATEAEEFGNIYGLEVVEVPTNLPIKRADEDDEVYRTAGEKYKAIIDEIKAAHERGQPMLVGTTSIEKSELLADMLKKSGFSKFQVLNARYHEQEAFIVAQAGVPGAVTIATNMAGRGTDIQLGGNPDMRIQQELAEVEPGPEREAREKAIREEVQKLKEKALDAGGLYVLATERHESRRIDNQLRGRSGRQGDPGRSKFFLSIQDDLMRIFGSDRMDGMLQKLGLKEGEAIVHPWINKALERAQKKVEARNFDIRKNLLKYDDVLNDQRKVIFEQRLELMDAESVSDTVADMRNEVIEDIVSKRIPERAYAEQWDVTGLKADVQQYFNLDLPVPDWAAEEGIAEDDILERVTAAVDAAAAERAERFGPEIMQYVERSVVLQTLDHLWREHIVNLDHLRSVIGFRGYAQRDPLQEYKSEAFELFQALLVNLRQAVSAQLMRVELVRETPQEPQPLPPMQGHHIDPLTGEDDFAEAPLLAVAPADRNPAEPSSWGKVARNEPCPCGSGKKYKHCHGIYEA.

ATP-binding positions include Gln89, 107–111, and Asp502; that span reads GEGKT. Residues Cys884, Cys886, Cys895, and His896 each contribute to the Zn(2+) site.

This sequence belongs to the SecA family. In terms of assembly, monomer and homodimer. Part of the essential Sec protein translocation apparatus which comprises SecA, SecYEG and auxiliary proteins SecDF-YajC and YidC. Requires Zn(2+) as cofactor.

The protein resides in the cell inner membrane. The protein localises to the cytoplasm. The catalysed reaction is ATP + H2O + cellular proteinSide 1 = ADP + phosphate + cellular proteinSide 2.. Its function is as follows. Part of the Sec protein translocase complex. Interacts with the SecYEG preprotein conducting channel. Has a central role in coupling the hydrolysis of ATP to the transfer of proteins into and across the cell membrane, serving both as a receptor for the preprotein-SecB complex and as an ATP-driven molecular motor driving the stepwise translocation of polypeptide chains across the membrane. In Sinorhizobium fredii (strain NBRC 101917 / NGR234), this protein is Protein translocase subunit SecA.